Here is a 203-residue protein sequence, read N- to C-terminus: Holliday junction branch migration complex subunit RuvA (203 aa).

Positions M1–V63 are domain I. A domain II region spans residues D64–A141. The tract at residues A141–A145 is flexible linker. The domain III stretch occupies residues V146–R203.

The protein belongs to the RuvA family. Homotetramer. Forms an RuvA(8)-RuvB(12)-Holliday junction (HJ) complex. HJ DNA is sandwiched between 2 RuvA tetramers; dsDNA enters through RuvA and exits via RuvB. An RuvB hexamer assembles on each DNA strand where it exits the tetramer. Each RuvB hexamer is contacted by two RuvA subunits (via domain III) on 2 adjacent RuvB subunits; this complex drives branch migration. In the full resolvosome a probable DNA-RuvA(4)-RuvB(12)-RuvC(2) complex forms which resolves the HJ.

Its subcellular location is the cytoplasm. The RuvA-RuvB-RuvC complex processes Holliday junction (HJ) DNA during genetic recombination and DNA repair, while the RuvA-RuvB complex plays an important role in the rescue of blocked DNA replication forks via replication fork reversal (RFR). RuvA specifically binds to HJ cruciform DNA, conferring on it an open structure. The RuvB hexamer acts as an ATP-dependent pump, pulling dsDNA into and through the RuvAB complex. HJ branch migration allows RuvC to scan DNA until it finds its consensus sequence, where it cleaves and resolves the cruciform DNA. The sequence is that of Holliday junction branch migration complex subunit RuvA from Streptomyces avermitilis (strain ATCC 31267 / DSM 46492 / JCM 5070 / NBRC 14893 / NCIMB 12804 / NRRL 8165 / MA-4680).